The following is a 343-amino-acid chain: Dimethyladenosine transferase 1, mitochondrial (343 aa).

S-adenosyl-L-methionine contacts are provided by residues 28–31, asparagine 29, leucine 31, glycine 56, glutamate 78, aspartate 133, and asparagine 169; that span reads QNFL.

This sequence belongs to the class I-like SAM-binding methyltransferase superfamily. rRNA adenine N(6)-methyltransferase family. KsgA subfamily.

It localises to the mitochondrion. Its function is as follows. Probable S-adenosyl-L-methionine-dependent methyltransferase which specifically dimethylates mitochondrial 12S rRNA at the conserved stem loop. Also required for basal transcription of mitochondrial DNA. Stimulates transcription independently of the methyltransferase activity. This Vermamoeba vermiformis (Amoeba) protein is Dimethyladenosine transferase 1, mitochondrial.